Consider the following 321-residue polypeptide: Nucleus-vacuole junction protein 1 (321 aa).

A signal peptide spans 1–22 (MTRPPLVRGIFSLGLSVAVLKG). Positions 73–125 (ELSWRKVFNFISRQSSELDARIYVLILLLSFLLPIAWTVLDGDRETTLEDKDN) are TSC13-binding. A helical membrane pass occupies residues 94–114 (IYVLILLLSFLLPIAWTVLDG). The tract at residues 139–195 (KHYNDGERAVLQFGKNRSEPIILSYKDMNVLEGEHEFTSKEEHSNSHLTSKSENALS) is OSH1-binding. S156 carries the post-translational modification Phosphoserine. Residues 174–183 (EFTSKEEHSN) show a composition bias toward basic and acidic residues. The tract at residues 174-194 (EFTSKEEHSNSHLTSKSENAL) is disordered. Residues 184 to 194 (SHLTSKSENAL) are compositionally biased toward polar residues. S199 carries the phosphoserine modification. Positions 210–275 (QLEEDKNEPN…SLKSSTSFPI (66 aa)) are disordered. The interval 233–321 (DCSSSSEVES…EQAYSQPFRY (89 aa)) is VAC8-binding. The span at 242 to 262 (SQSKCRKESTAEPDSLSRDTR) shows a compositional bias: basic and acidic residues. Residues 263–272 (TTSSLKSSTS) show a composition bias toward low complexity. 2 positions are modified to phosphoserine: S285 and S298. Positions 299 to 321 (PTKSSNLDAQVNTEQAYSQPFRY) are disordered.

Interacts with OSH1, TSC13 and VAC8.

The protein localises to the nucleus outer membrane. Its function is as follows. Involved in the formation of nucleus-vacuole (NV) junctions during piecemeal microautophagy of the nucleus (PMN). NV junctions are interorganelle interfaces mediated by NVJ1 in the nuclear envelope and VAC8 on the vacuole membrane. Together, NVJ1 and VAC8 form Velcro-like patches through which teardrop-like portions of the nucleus are pinched off into the vacuolar lumen and degraded by the PMN process. Also acts as an outer-nuclear membrane receptor for OSH1 and TSC13. The polypeptide is Nucleus-vacuole junction protein 1 (NVJ1) (Saccharomyces cerevisiae (strain YJM789) (Baker's yeast)).